The primary structure comprises 287 residues: MRIVIITGLSGSGKSTAVRALEDEGFFCLDNLPVSLVTTFIELVEHSREDIKDVALVMDIRSRDFIKGYDQVFQAMASAGHSVKIFYFDATDEVLIRRFSETRRRHPALEGASVPEGIRFERDQLAGLRRIATAIIDTSEMNVHRLKELVIGLVKGGEGVLEMQVNLQSFGFRYGLPLESDLVMDVRFLPNPYFVATLRPFSGLDQGVREYVMGHKETVVFLEHFRNMLELLLPSYRREGKSYLSVSIGCTGGRHRSVAIAEELYNYFRQRNVNIKITHRDIDKGLG.

8–15 is an ATP binding site; it reads GLSGSGKS. A GTP-binding site is contributed by 59 to 62; that stretch reads DIRS.

This sequence belongs to the RapZ-like family.

Its function is as follows. Displays ATPase and GTPase activities. This chain is Nucleotide-binding protein GM21_3387, found in Geobacter sp. (strain M21).